We begin with the raw amino-acid sequence, 535 residues long: Succinate-semialdehyde dehydrogenase, mitochondrial (535 aa).

Residues 1-47 (MATCIWLRSCGARRLGSTFPGCRLRPRAGGLVPASGPAPGPAQLRCY) constitute a mitochondrion transit peptide. Lys126 carries the post-translational modification N6-acetyllysine; alternate. The residue at position 126 (Lys126) is an N6-succinyllysine; alternate. Residues Lys135 and Lys184 each carry the N6-succinyllysine modification. Residues Arg213 and 228 to 231 (KPAE) each bind NAD(+). Arg213 provides a ligand contact to substrate. Lys265 bears the N6-acetyllysine; alternate mark. Lys265 carries the post-translational modification N6-succinyllysine; alternate. 284 to 289 (GSTTTG) contacts NAD(+). Glu306 (proton acceptor) is an active-site residue. Position 334 (Arg334) interacts with substrate. The active-site Nucleophile is the Cys340. An intrachain disulfide couples Cys340 to Cys342. An N6-acetyllysine modification is found at Lys365. Lys402 carries the N6-succinyllysine modification. The residue at position 411 (Lys411) is an N6-acetyllysine. Ser498 provides a ligand contact to substrate. Phosphoserine is present on Ser499.

Belongs to the aldehyde dehydrogenase family. In terms of assembly, homotetramer.

The protein localises to the mitochondrion. It catalyses the reaction succinate semialdehyde + NAD(+) + H2O = succinate + NADH + 2 H(+). Its pathway is amino-acid degradation; 4-aminobutanoate degradation. Redox-regulated. Inhibited under oxydizing conditions. Functionally, catalyzes one step in the degradation of the inhibitory neurotransmitter gamma-aminobutyric acid (GABA). The chain is Succinate-semialdehyde dehydrogenase, mitochondrial (ALDH5A1) from Pan troglodytes (Chimpanzee).